Reading from the N-terminus, the 142-residue chain is Aspartate 1-decarboxylase (142 aa).

The active-site Schiff-base intermediate with substrate; via pyruvic acid is the S25. S25 carries the post-translational modification Pyruvic acid (Ser). T57 is a binding site for substrate. Residue Y58 is the Proton donor of the active site. Residue 73 to 75 (GAA) participates in substrate binding.

It belongs to the PanD family. Heterooctamer of four alpha and four beta subunits. Pyruvate is required as a cofactor. Is synthesized initially as an inactive proenzyme, which is activated by self-cleavage at a specific serine bond to produce a beta-subunit with a hydroxyl group at its C-terminus and an alpha-subunit with a pyruvoyl group at its N-terminus.

Its subcellular location is the cytoplasm. The enzyme catalyses L-aspartate + H(+) = beta-alanine + CO2. The protein operates within cofactor biosynthesis; (R)-pantothenate biosynthesis; beta-alanine from L-aspartate: step 1/1. Functionally, catalyzes the pyruvoyl-dependent decarboxylation of aspartate to produce beta-alanine. In Arthrobacter sp. (strain FB24), this protein is Aspartate 1-decarboxylase.